Here is a 95-residue protein sequence, read N- to C-terminus: Aspartyl/glutamyl-tRNA(Asn/Gln) amidotransferase subunit C (95 aa).

It belongs to the GatC family. In terms of assembly, heterotrimer of A, B and C subunits.

It catalyses the reaction L-glutamyl-tRNA(Gln) + L-glutamine + ATP + H2O = L-glutaminyl-tRNA(Gln) + L-glutamate + ADP + phosphate + H(+). The enzyme catalyses L-aspartyl-tRNA(Asn) + L-glutamine + ATP + H2O = L-asparaginyl-tRNA(Asn) + L-glutamate + ADP + phosphate + 2 H(+). Its function is as follows. Allows the formation of correctly charged Asn-tRNA(Asn) or Gln-tRNA(Gln) through the transamidation of misacylated Asp-tRNA(Asn) or Glu-tRNA(Gln) in organisms which lack either or both of asparaginyl-tRNA or glutaminyl-tRNA synthetases. The reaction takes place in the presence of glutamine and ATP through an activated phospho-Asp-tRNA(Asn) or phospho-Glu-tRNA(Gln). The chain is Aspartyl/glutamyl-tRNA(Asn/Gln) amidotransferase subunit C from Chlorobaculum tepidum (strain ATCC 49652 / DSM 12025 / NBRC 103806 / TLS) (Chlorobium tepidum).